The primary structure comprises 125 residues: SKP1-like protein 7 (125 aa).

Residues 94–125 (MNAAYDLHIKSLLALAYQTVADMVNDNKWAFE) form an interaction with the F-box domain of F-box proteins region.

The protein belongs to the SKP1 family. In terms of assembly, part of a SCF (SKP1-cullin-F-box) protein ligase complex. In terms of tissue distribution, restricted to siliques.

It localises to the nucleus. It functions in the pathway protein modification; protein ubiquitination. Involved in ubiquitination and subsequent proteasomal degradation of target proteins. Together with CUL1, RBX1 and a F-box protein, it forms a SCF E3 ubiquitin ligase complex. The functional specificity of this complex depends on the type of F-box protein. In the SCF complex, it serves as an adapter that links the F-box protein to CUL1. This is SKP1-like protein 7 (ASK7) from Arabidopsis thaliana (Mouse-ear cress).